The chain runs to 262 residues: Intercellular adhesion molecule 4 (262 aa).

The N-terminal stretch at 1–22 is a signal peptide; that stretch reads MESALLLPSLLLVAAYPRGGSP. Residues 23 to 231 are Extracellular-facing; the sequence is QQEWMQSPPA…LTVLALSPAS (209 aa). Ig-like C2-type domains lie at 54–116 and 138–209; these read GGSA…TREA and GHKY…LNLD. N-linked (GlcNAc...) asparagine glycans are attached at residues asparagine 60, asparagine 84, and asparagine 182. 4 cysteine pairs are disulfide-bonded: cysteine 61–cysteine 105, cysteine 61–cysteine 109, cysteine 65–cysteine 109, and cysteine 145–cysteine 202. A helical membrane pass occupies residues 232–252; that stretch reads IALASTSIATLVGILLAVGAV. Topologically, residues 253–262 are cytoplasmic; that stretch reads YVRKYLAVQT.

Belongs to the immunoglobulin superfamily. ICAM family.

Its subcellular location is the cell membrane. It is found in the secreted. Functionally, adhesion molecule that binds to leukocyte adhesion LFA-1 protein LFA-1 (integrin alpha-L/beta-2). ICAM4 is also a ligand for alpha-4/beta-1 and alpha-V integrins. Isoform 2 may modulate binding of membrane-associated ICAM4. The chain is Intercellular adhesion molecule 4 (Icam4) from Mus musculus (Mouse).